A 411-amino-acid chain; its full sequence is Adenylosuccinate synthetase (411 aa).

GTP is bound by residues 11–17 and 39–41; these read GDEGKGK and GHT. The active-site Proton acceptor is Asp-12. Mg(2+)-binding residues include Asp-12 and Gly-39. Residues 12 to 15, 37 to 40, Thr-121, Arg-135, Gln-215, Thr-230, and Arg-294 contribute to the IMP site; these read DEGK and NAGH. The Proton donor role is filled by His-40. 290–296 is a binding site for substrate; the sequence is TTTKRPR. Residues Arg-296, 322–324, and 400–402 each bind GTP; these read KLD and STS.

This sequence belongs to the adenylosuccinate synthetase family. Homodimer. It depends on Mg(2+) as a cofactor.

Its subcellular location is the cytoplasm. It carries out the reaction IMP + L-aspartate + GTP = N(6)-(1,2-dicarboxyethyl)-AMP + GDP + phosphate + 2 H(+). The protein operates within purine metabolism; AMP biosynthesis via de novo pathway; AMP from IMP: step 1/2. In terms of biological role, plays an important role in the de novo pathway of purine nucleotide biosynthesis. Catalyzes the first committed step in the biosynthesis of AMP from IMP. The protein is Adenylosuccinate synthetase of Helicobacter pylori (strain ATCC 700392 / 26695) (Campylobacter pylori).